Reading from the N-terminus, the 221-residue chain is Putative NAD(P)H nitroreductase YfkO (221 aa).

Residues 15 to 17 and 73 to 75 each bind FMN; these read RHA and QKQ. Residue 157–162 coordinates NAD(+); it reads AAAQIG. FMN contacts are provided by residues 169–170 and arginine 211; that span reads EG.

This sequence belongs to the nitroreductase family. As to quaternary structure, monomer. The cofactor is FMN.

In Bacillus subtilis (strain 168), this protein is Putative NAD(P)H nitroreductase YfkO (yfkO).